A 285-amino-acid polypeptide reads, in one-letter code: 3-methyl-2-oxobutanoate hydroxymethyltransferase (285 aa).

A disordered region spans residues 1 to 23; the sequence is MSEHNVYGAAQPAQPAQPAQPRT. Low complexity predominate over residues 9–21; it reads AAQPAQPAQPAQP. Aspartate 66 and aspartate 105 together coordinate Mg(2+). 3-methyl-2-oxobutanoate is bound by residues 66-67, aspartate 105, and lysine 135; that span reads DS. Position 137 (glutamate 137) interacts with Mg(2+). The Proton acceptor role is filled by glutamate 203.

This sequence belongs to the PanB family. Homodecamer; pentamer of dimers. The cofactor is Mg(2+).

Its subcellular location is the cytoplasm. The enzyme catalyses 3-methyl-2-oxobutanoate + (6R)-5,10-methylene-5,6,7,8-tetrahydrofolate + H2O = 2-dehydropantoate + (6S)-5,6,7,8-tetrahydrofolate. Its pathway is cofactor biosynthesis; (R)-pantothenate biosynthesis; (R)-pantoate from 3-methyl-2-oxobutanoate: step 1/2. Functionally, catalyzes the reversible reaction in which hydroxymethyl group from 5,10-methylenetetrahydrofolate is transferred onto alpha-ketoisovalerate to form ketopantoate. This Mycobacterium avium (strain 104) protein is 3-methyl-2-oxobutanoate hydroxymethyltransferase.